The chain runs to 22 residues: QRFIHPTYRPPPQPRRPVIMRA.

Glutamine 1 is subject to Pyrrolidone carboxylic acid. A disordered region spans residues glutamine 1–alanine 22. A glycan (O-linked (GalNAc...) threonine) is linked at threonine 7.

In terms of assembly, monomer. In terms of tissue distribution, hemolymph.

It localises to the secreted. In terms of biological role, has antibacterial activity, preferentially against Gram-negative bacteria. The protein is Heliocin of Heliothis virescens (Tobacco budworm moth).